A 137-amino-acid polypeptide reads, in one-letter code: Large ribosomal subunit protein uL16 (137 aa).

The interval 1 to 20 is disordered; it reads MLQPSNRKYRKDFKGRNRGV. Residues 7-17 are compositionally biased toward basic residues; the sequence is RKYRKDFKGRN.

It belongs to the universal ribosomal protein uL16 family. In terms of assembly, part of the 50S ribosomal subunit.

Binds 23S rRNA and is also seen to make contacts with the A and possibly P site tRNAs. This is Large ribosomal subunit protein uL16 from Coxiella burnetii (strain CbuG_Q212) (Coxiella burnetii (strain Q212)).